The sequence spans 589 residues: Probable translation initiation factor IF-2 (589 aa).

Residues 4-225 (VRSPFVVVMG…AGVSQRFIPR (222 aa)) enclose the tr-type G domain. The interval 13-20 (GHVDVGKT) is G1. GTP is bound at residue 13-20 (GHVDVGKT). A G2 region spans residues 38 to 42 (MITQH). Residues 79–82 (DTPG) are G3. GTP is bound by residues 79-83 (DTPGH) and 133-136 (NKLD). The interval 133–136 (NKLD) is G4. The segment at 201–203 (SAV) is G5.

It belongs to the TRAFAC class translation factor GTPase superfamily. Classic translation factor GTPase family. IF-2 subfamily.

In terms of biological role, function in general translation initiation by promoting the binding of the formylmethionine-tRNA to ribosomes. Seems to function along with eIF-2. This chain is Probable translation initiation factor IF-2, found in Pyrobaculum aerophilum (strain ATCC 51768 / DSM 7523 / JCM 9630 / CIP 104966 / NBRC 100827 / IM2).